Reading from the N-terminus, the 579-residue chain is Proline--tRNA ligase (579 aa).

This sequence belongs to the class-II aminoacyl-tRNA synthetase family. ProS type 1 subfamily. As to quaternary structure, homodimer.

Its subcellular location is the cytoplasm. The enzyme catalyses tRNA(Pro) + L-proline + ATP = L-prolyl-tRNA(Pro) + AMP + diphosphate. Catalyzes the attachment of proline to tRNA(Pro) in a two-step reaction: proline is first activated by ATP to form Pro-AMP and then transferred to the acceptor end of tRNA(Pro). As ProRS can inadvertently accommodate and process non-cognate amino acids such as alanine and cysteine, to avoid such errors it has two additional distinct editing activities against alanine. One activity is designated as 'pretransfer' editing and involves the tRNA(Pro)-independent hydrolysis of activated Ala-AMP. The other activity is designated 'posttransfer' editing and involves deacylation of mischarged Ala-tRNA(Pro). The misacylated Cys-tRNA(Pro) is not edited by ProRS. The sequence is that of Proline--tRNA ligase from Chlamydia muridarum (strain MoPn / Nigg).